Consider the following 1017-residue polypeptide: Rho-GTPase-activating protein LRG1 (1017 aa).

Methionine 1 carries the N-acetylmethionine modification. 2 LIM zinc-binding domains span residues 28–88 and 98–148; these read CARC…LCQY and CHVC…CKYH. The region spanning 155–184 is the LIM zinc-binding 3; truncated domain; that stretch reads KRCKGCEFPISDQYIEFPKGEEIHCWHPEC. The 56-residue stretch at 419-474 folds into the LIM zinc-binding 4 domain; sequence CAGCNKYIQEECIQFYEHRWHIACFTCSSCHKNINPRSLTDPTFNKEKKKILCSHC. A Phosphoserine modification is found at serine 562. The segment at 570-602 is disordered; sequence TDLNDPTKQGDSKNLVIQTDDPSSSQQVSTREN. Over residues 584–602 the composition is skewed to polar residues; sequence LVIQTDDPSSSQQVSTREN. Residues 730–953 enclose the Rho-GAP domain; that stretch reads APLDVLCEKW…YLITHNEEMA (224 aa).

In terms of assembly, interacts with CDC42, RHO1 and RHO2.

It is found in the cytoplasm. Its subcellular location is the bud. It localises to the bud neck. In terms of biological role, acts in signal transduction. Activates CDC42, RHO1 and RHO2. Negatively regulates 1,3-beta-glucan synthesis. May be responsible for the down-regulation of CDC42 during mating. The polypeptide is Rho-GTPase-activating protein LRG1 (LRG1) (Saccharomyces cerevisiae (strain ATCC 204508 / S288c) (Baker's yeast)).